The following is a 156-amino-acid chain: Ribosome maturation factor RimP (156 aa).

Belongs to the RimP family.

It localises to the cytoplasm. In terms of biological role, required for maturation of 30S ribosomal subunits. The polypeptide is Ribosome maturation factor RimP (Dictyoglomus thermophilum (strain ATCC 35947 / DSM 3960 / H-6-12)).